A 479-amino-acid polypeptide reads, in one-letter code: Protein nucleotidyltransferase YdiU (479 aa).

Residues G83, G85, R86, K106, D118, G119, R169, and R176 each coordinate ATP. The Proton acceptor role is filled by D245. 2 residues coordinate Mg(2+): N246 and D255. D255 is an ATP binding site.

Belongs to the SELO family. Mg(2+) is required as a cofactor. Requires Mn(2+) as cofactor.

The enzyme catalyses L-seryl-[protein] + ATP = 3-O-(5'-adenylyl)-L-seryl-[protein] + diphosphate. The catalysed reaction is L-threonyl-[protein] + ATP = 3-O-(5'-adenylyl)-L-threonyl-[protein] + diphosphate. It catalyses the reaction L-tyrosyl-[protein] + ATP = O-(5'-adenylyl)-L-tyrosyl-[protein] + diphosphate. It carries out the reaction L-histidyl-[protein] + UTP = N(tele)-(5'-uridylyl)-L-histidyl-[protein] + diphosphate. The enzyme catalyses L-seryl-[protein] + UTP = O-(5'-uridylyl)-L-seryl-[protein] + diphosphate. The catalysed reaction is L-tyrosyl-[protein] + UTP = O-(5'-uridylyl)-L-tyrosyl-[protein] + diphosphate. Functionally, nucleotidyltransferase involved in the post-translational modification of proteins. It can catalyze the addition of adenosine monophosphate (AMP) or uridine monophosphate (UMP) to a protein, resulting in modifications known as AMPylation and UMPylation. The sequence is that of Protein nucleotidyltransferase YdiU from Erwinia tasmaniensis (strain DSM 17950 / CFBP 7177 / CIP 109463 / NCPPB 4357 / Et1/99).